The sequence spans 1187 residues: MIIFATPKVCKGKTRILYFYLSKLFFYVYFFFLIYYSIQKHSYINSTMPIIPLEDDKDDDWILEDEDDPEFQAILQGNSSKGPAQRTLEGSVAAVSTRPQNDKYETIPVPVKINTPTHHAMDFENLKTYIYPTNFEIRDYQYNIVERAFYDNLLVALPTGLGKTFIASTVMLNFLRWFPISKIIFMAPTRPLVAQQIKACCSIAGIPSSKVAILLDKTRRNRAEIWNSRQVFFTTPQVVENDLASGVVNPKSIALLVIDEAHRAKGNYSYNNVVKFINRFSDSYRILALTATPASDVEGVQQIIDNLNISKVEVRTEQSIDIVRHMKRKTVERKTCYPSSEITECIELLAEGITPVLNTAKERGLLDLTDPTRINFLQCMEISRKIVANPTIPEGLKWSNYFILQLLGMVGQCYRRLNIYGIRSFQSYFNEKFLEFKTKWNAKKSTNKLNADFYFSDPITTLMDRVEELSKTLTYGHPKIEALMEELDDFFKNHETAGSRVIIFTEFRESALEIVQCIEKANDNRKPHIFIGQSKEKEKFDVENFGKKKQKGQTKKKKDERPSTRSSSENAQMTGMSQKLQKEIIKKFKKGVFNILVATSIGEEGLDIGEVDLIICYDSTSSPIKNIQRMGRTGRKRDGKVLMLFSSNEESKFDKAMGGYEYIQQHIMKGDFIQLRPQHRMIPDEYKPEAVKQLIQIPEENIELKAEDDEDEIIRIATSYMLGGKGKKGKKANNNSTKKPAKTFFMPDNVETGFKSAATMVRKVGDNKSLAERNKEKTFLDKLVDSDSESEVDKENENVIQEVDKSKNQEQNDHIITELDNTEQSVAGNTKSTTNGTSYSEPENNNQVNQESVTANLDSVARVPEPEVIENSESEEEQISKITHNTPATSVDLSNGPEETSYKIDSVLIDLIDDDFTFSSDTEGDKVEVIDAVSPEVCKLPEKPATPPIRKSLGVKRKVNKTPDPESNSISIPSSTTKKSHNEVTRKVVQDPSTTNKKSLGVKRPRPVSIIDQLKRQKIRSQVIVSRETQSIIEHESRTQSSLPSPRNMSDEISEIDVIIDLDDDDDDDNKVNGHDKSQTTISKVQPIYEFSNKEDEGFLSSSQTRELYKNYYIAIDSSDDIPFYDPVQGFSKIKDTDKFTMGRTGPITHSLRTQRLFQACNAEFDSQLAAQTKDNDKQDYTFILKK.

The Helicase ATP-binding domain occupies 144–311 (IVERAFYDNL…QIIDNLNISK (168 aa)). 157 to 164 (LPTGLGKT) serves as a coordination point for ATP. The DEAH box signature appears at 259-262 (DEAH). Residues 486 to 681 (ELDDFFKNHE…FIQLRPQHRM (196 aa)) form the Helicase C-terminal domain. Disordered stretches follow at residues 542 to 576 (VENF…MTGM), 781 to 848 (DKLV…NNQV), and 941 to 1003 (PEKP…LGVK). A compositionally biased stretch (basic residues) spans 547-556 (KKKQKGQTKK). A compositionally biased stretch (polar residues) spans 564–576 (TRSSSENAQMTGM). Residues 781–817 (DKLVDSDSESEVDKENENVIQEVDKSKNQEQNDHIIT) are compositionally biased toward basic and acidic residues. The span at 822 to 848 (TEQSVAGNTKSTTNGTSYSEPENNNQV) shows a compositional bias: polar residues. Over residues 967–977 (SNSISIPSSTT) the composition is skewed to low complexity. Basic and acidic residues predominate over residues 980-989 (SHNEVTRKVV).

Belongs to the DEAD box helicase family. DEAH subfamily. FANCM sub-subfamily. Interacts with the MHF histone-fold complex to form the FANCM-MHF complex.

The protein resides in the nucleus. It carries out the reaction ATP + H2O = ADP + phosphate + H(+). Its function is as follows. ATP-dependent DNA helicase involved in DNA damage repair by homologous recombination and in genome maintenance. Capable of unwinding D-loops. Plays a role in limiting crossover recombinants during mitotic DNA double-strand break (DSB) repair. Component of a FANCM-MHF complex which promotes gene conversion at blocked replication forks, probably by reversal of the stalled fork. The polypeptide is ATP-dependent DNA helicase MPH1 (Candida albicans (strain SC5314 / ATCC MYA-2876) (Yeast)).